A 317-amino-acid polypeptide reads, in one-letter code: R2-like ligand binding oxidase (317 aa).

The Mn(2+) site is built by Glu73, Glu106, and His109. The 3-(O4'-tyrosyl)-valine (Val-Tyr) cross-link spans 76–167; the sequence is VTQDLQPFMA…ANQVRASVTY (92 aa). Glu106 lines the Fe cation pocket. Fe cation contacts are provided by Glu172, Glu207, and His210.

This sequence belongs to the ribonucleoside diphosphate reductase small chain family. R2-like ligand binding oxidase subfamily. In terms of assembly, homodimer. The cofactor is Fe cation. Requires Mn(2+) as cofactor.

In terms of biological role, probable oxidase. The sequence is that of R2-like ligand binding oxidase from Saccharopolyspora erythraea (strain ATCC 11635 / DSM 40517 / JCM 4748 / NBRC 13426 / NCIMB 8594 / NRRL 2338).